Reading from the N-terminus, the 371-residue chain is Transcription factor bHLH77 (371 aa).

3 disordered regions span residues 1-25 (MNMDKETEQTLNYLPLGQSDPFGNG), 65-206 (SGGI…SLAE), and 352-371 (QSNNNNNNCSEPTLQMKLEP). The span at 85-96 (SQPTTQESNKSS) shows a compositional bias: polar residues. A compositionally biased stretch (low complexity) spans 128–142 (SPASSSLTASNSKVS). Residues 165–190 (GVEKCDSKGDNKDDAKPPEAPKDYIH) are compositionally biased toward basic and acidic residues. Residues 197-247 (QATDSHSLAERARREKISERMTLLQDLVPGCNRITGKAVMLDEIINYVQSL) enclose the bHLH domain.

In terms of assembly, homodimer. Interacts with IBH1. In terms of tissue distribution, expressed constitutively in roots, leaves, stems, and flowers.

It is found in the nucleus. In Arabidopsis thaliana (Mouse-ear cress), this protein is Transcription factor bHLH77 (BHLH77).